The sequence spans 204 residues: Phosphopantothenoylcysteine decarboxylase (204 aa).

FMN-binding positions include Thr53 and 104–107 (DANT). Substrate is bound at residue Asn140. The Proton donor role is filled by Cys173.

It belongs to the HFCD (homooligomeric flavin containing Cys decarboxylase) superfamily. Homotrimer. FMN serves as cofactor.

It catalyses the reaction N-[(R)-4-phosphopantothenoyl]-L-cysteine + H(+) = (R)-4'-phosphopantetheine + CO2. Its pathway is cofactor biosynthesis; coenzyme A biosynthesis; CoA from (R)-pantothenate: step 3/5. Functionally, catalyzes the decarboxylation of the cysteine moiety of 4-phosphopantothenoylcysteine to form 4'-phosphopantotheine and this reaction forms part of the biosynthesis of coenzyme A. The protein is Phosphopantothenoylcysteine decarboxylase (Ppcdc) of Mus musculus (Mouse).